Here is a 166-residue protein sequence, read N- to C-terminus: Photosystem I assembly protein Ycf3 (166 aa).

TPR repeat units lie at residues 31 to 64 (AFKY…EEDP), 68 to 101 (SYIL…NPNL), and 116 to 149 (GEQA…APNN).

The protein belongs to the Ycf3 family.

Its subcellular location is the cellular thylakoid membrane. Essential for the assembly of the photosystem I (PSI) complex. May act as a chaperone-like factor to guide the assembly of the PSI subunits. The protein is Photosystem I assembly protein Ycf3 of Acaryochloris marina (strain MBIC 11017).